The sequence spans 975 residues: Glycine dehydrogenase (decarboxylating) (975 aa).

Lys723 carries the post-translational modification N6-(pyridoxal phosphate)lysine.

Belongs to the GcvP family. As to quaternary structure, the glycine cleavage system is composed of four proteins: P, T, L and H. It depends on pyridoxal 5'-phosphate as a cofactor.

The catalysed reaction is N(6)-[(R)-lipoyl]-L-lysyl-[glycine-cleavage complex H protein] + glycine + H(+) = N(6)-[(R)-S(8)-aminomethyldihydrolipoyl]-L-lysyl-[glycine-cleavage complex H protein] + CO2. Functionally, the glycine cleavage system catalyzes the degradation of glycine. The P protein binds the alpha-amino group of glycine through its pyridoxal phosphate cofactor; CO(2) is released and the remaining methylamine moiety is then transferred to the lipoamide cofactor of the H protein. In Burkholderia vietnamiensis (strain G4 / LMG 22486) (Burkholderia cepacia (strain R1808)), this protein is Glycine dehydrogenase (decarboxylating).